Reading from the N-terminus, the 28-residue chain is Humanin-like 2 (28 aa).

Belongs to the humanin family. As to expression, highly expressed in testis. Also expressed in kidney, heart, skeletal muscles and brain.

The protein localises to the secreted. Its subcellular location is the cytoplasm. Functionally, plays a role as a neuroprotective and antiapoptotic factor. In Homo sapiens (Human), this protein is Humanin-like 2.